Here is a 120-residue protein sequence, read N- to C-terminus: MARIAGVNIPNHQHAEIALTAIFGIGRTRAQKICDAAGVGRNVKMKDLSDSDMDRLRDEVGKFTVEGDLRREVTMNIKRLMDLGCYRGLRHRKGLPCRGQRTRTNARTRKGPRKAIAGKK.

The interval 96-120 (PCRGQRTRTNARTRKGPRKAIAGKK) is disordered.

This sequence belongs to the universal ribosomal protein uS13 family. In terms of assembly, part of the 30S ribosomal subunit. Forms a loose heterodimer with protein S19. Forms two bridges to the 50S subunit in the 70S ribosome.

Functionally, located at the top of the head of the 30S subunit, it contacts several helices of the 16S rRNA. In the 70S ribosome it contacts the 23S rRNA (bridge B1a) and protein L5 of the 50S subunit (bridge B1b), connecting the 2 subunits; these bridges are implicated in subunit movement. Contacts the tRNAs in the A and P-sites. The sequence is that of Small ribosomal subunit protein uS13 from Dechloromonas aromatica (strain RCB).